The sequence spans 470 residues: MTATRLPDGFAVQVDRRVRVLGDGSALLGGSPTRLLRLAPAARGLLCDGRLKVRDEVSAELARILLDATVAHPRPPSGPSHRDVTVVIPVRNNASGLRRLVTSLRGLRVIVVDDGSACPVESDDFVGAHCDIEVLHHPHSKGPAAARNTGLAACTTDFVAFLDSDVTPRRGWLESLLGHFCDPTVALVAPRIVSLVEGENPVARYEALHSSLDLGQREAPVLPHSTVSYVPSAAIVCRSSAIRDVGGFDETMHSGEDVDLCWRLIEAGARLRYEPIALVAHDHRTQLRDWIARKAFYGGSAAPLAVRHPDKTAPLVISGGALMAWILMSIGTGLGRLASLVIAVLTGRRIARAMRCAETSFLDVLAVATRGLWAAALQLASAICRHYWPLALLAAILSRRCRRVVLIAAVVDGVVDWLRRREGADDDAEPIGPLTYLVLKRVDDLAYGAGLWYGVVRERNIGALKPQIRT.

A helical membrane pass occupies residues 315-335 (LVISGGALMAWILMSIGTGLG).

Belongs to the glycosyltransferase 2 family.

It is found in the cell membrane. In terms of biological role, involved in the biosynthesis of the enzyme cofactor mycofactocin (MFT). Acts as a glycosyltransferase that catalyzes the oligoglycosylation of pre-mycofactocin (PMFT), adding up to nine beta-1,4-linked glucose residues. Is required for the in vivo ethanol assimilation in M.smegmatis. In Mycobacterium tuberculosis (strain CDC 1551 / Oshkosh), this protein is Pre-mycofactocin glycosyltransferase (mftF).